We begin with the raw amino-acid sequence, 310 residues long: Transcription factor LRL2 (310 aa).

Low complexity-rich tracts occupy residues 1-20 (MNSSSLLTPSSSPSPHLQSP) and 104-126 (QTQTQSQATASATTGGATAQPQT). 2 disordered regions span residues 1–23 (MNSSSLLTPSSSPSPHLQSPATF) and 95–143 (FHLP…PHSI). The segment at 136–149 (QATDPHSIAERLRR) is basic motif; degenerate. Residues 136–185 (QATDPHSIAERLRRERIAERMKSLQELVPNGNKTDKASMLDEIIDYVKFL) enclose the bHLH domain. The interval 150–185 (ERIAERMKSLQELVPNGNKTDKASMLDEIIDYVKFL) is helix-loop-helix motif. Residues 203–225 (ASSQISEDAGGSHENTSSSGEAK) form a disordered region.

Homodimer. As to expression, expressed constitutively in roots, leaves, stems, and flowers.

It is found in the nucleus. Its function is as follows. Transcription factor that regulates the development of root hairs. Transcription factor that regulates the development of sperm cells. This chain is Transcription factor LRL2, found in Arabidopsis thaliana (Mouse-ear cress).